The primary structure comprises 876 residues: Serrate RNA effector molecule homolog (876 aa).

The disordered stretch occupies residues 1–90; it reads MGDSDDEYDR…RRDWDEHSSD (90 aa). N-acetylglycine is present on G2. A Phosphoserine modification is found at S4. Y8 carries the post-translational modification Phosphotyrosine. Positions 8–73 are enriched in basic and acidic residues; it reads YDRRRRDKFR…ERFSPPRHEL (66 aa). A phosphoserine mark is found at S67, S74, and S136. A Glycyl lysine isopeptide (Lys-Gly) (interchain with G-Cter in SUMO2) cross-link involves residue K150. Residues 271-412 are disordered; that stretch reads EEEEEQAGKP…KPKDAAGLEC (142 aa). Over residues 297–347 the composition is skewed to basic and acidic residues; the sequence is DGERKTNDKDEKKEDGKQAENDSSNDDKTKKSEGDGDKEEKKEDSEKEAKK. Acidic residues predominate over residues 370–387; that stretch reads SESESESGQAEEEKEEAE. The segment covering 388 to 412 has biased composition (basic and acidic residues); the sequence is EALKEKEKPKEEEWEKPKDAAGLEC. 2 positions are modified to phosphoserine: S493 and S540. The residue at position 544 (T544) is a Phosphothreonine. Phosphoserine is present on S570. Residues 575 to 598 are disordered; sequence ELLGSSGGAPPEEPPKEGNPAEIN. Phosphothreonine is present on T671. Phosphoserine is present on S679. Residues R833, R840, and R850 each carry the omega-N-methylarginine modification. A disordered region spans residues 835–854; that stretch reads NYDAFRGQGGYPGKPRNRMV.

The protein belongs to the ARS2 family. In terms of assembly, interacts with NCBP1 and DROSHA. Interacts with CASP8AP2 and ERBB4. Interacts with LUZP4. Interacts with NCBP2/CBP20 and NCBP3. Interacts with MTREX. In terms of tissue distribution, ubiquitously expressed.

It is found in the nucleus. The protein resides in the nucleoplasm. Its subcellular location is the cytoplasm. Functionally, acts as a mediator between the cap-binding complex (CBC) and the primary microRNAs (miRNAs) processing machinery during cell proliferation. Contributes to the stability and delivery of capped primary miRNA transcripts to the primary miRNA processing complex containing DGCR8 and DROSHA, thereby playing a role in RNA-mediated gene silencing (RNAi) by miRNAs. Binds capped RNAs (m7GpppG-capped RNA); however interaction is probably mediated via its interaction with NCBP1/CBP80 component of the CBC complex. Involved in cell cycle progression at S phase. Does not directly confer arsenite resistance but rather modulates arsenic sensitivity. Independently of its activity on miRNAs, necessary and sufficient to promote neural stem cell self-renewal. Does so by directly binding SOX2 promoter and positively regulating its transcription. The protein is Serrate RNA effector molecule homolog (SRRT) of Homo sapiens (Human).